Consider the following 204-residue polypeptide: Large ribosomal subunit protein bL25 (204 aa).

It belongs to the bacterial ribosomal protein bL25 family. CTC subfamily. As to quaternary structure, part of the 50S ribosomal subunit; part of the 5S rRNA/L5/L18/L25 subcomplex. Contacts the 5S rRNA. Binds to the 5S rRNA independently of L5 and L18.

Its function is as follows. This is one of the proteins that binds to the 5S RNA in the ribosome where it forms part of the central protuberance. The chain is Large ribosomal subunit protein bL25 from Pseudomonas paraeruginosa (strain DSM 24068 / PA7) (Pseudomonas aeruginosa (strain PA7)).